The following is a 339-amino-acid chain: Inositol 2-dehydrogenase 2 (339 aa).

It belongs to the Gfo/Idh/MocA family. Homotetramer.

The catalysed reaction is myo-inositol + NAD(+) = scyllo-inosose + NADH + H(+). In terms of biological role, involved in the oxidation of myo-inositol (MI) to 2-keto-myo-inositol (2KMI or 2-inosose). The chain is Inositol 2-dehydrogenase 2 from Saccharopolyspora erythraea (strain ATCC 11635 / DSM 40517 / JCM 4748 / NBRC 13426 / NCIMB 8594 / NRRL 2338).